Reading from the N-terminus, the 363-residue chain is 3-isopropylmalate dehydrogenase (363 aa).

78–91 contributes to the NAD(+) binding site; sequence GPKWEHLPPDQQPE. Substrate is bound by residues Arg-99, Arg-109, Arg-138, and Asp-227. Residues Asp-227, Asp-251, and Asp-255 each coordinate Mg(2+). Position 285-297 (285-297) interacts with NAD(+); that stretch reads GSAPDIAGKNIAN.

The protein belongs to the isocitrate and isopropylmalate dehydrogenases family. LeuB type 1 subfamily. Homodimer. It depends on Mg(2+) as a cofactor. Mn(2+) is required as a cofactor.

The protein resides in the cytoplasm. It catalyses the reaction (2R,3S)-3-isopropylmalate + NAD(+) = 4-methyl-2-oxopentanoate + CO2 + NADH. It functions in the pathway amino-acid biosynthesis; L-leucine biosynthesis; L-leucine from 3-methyl-2-oxobutanoate: step 3/4. Its function is as follows. Catalyzes the oxidation of 3-carboxy-2-hydroxy-4-methylpentanoate (3-isopropylmalate) to 3-carboxy-4-methyl-2-oxopentanoate. The product decarboxylates to 4-methyl-2 oxopentanoate. The protein is 3-isopropylmalate dehydrogenase of Escherichia coli O157:H7.